Reading from the N-terminus, the 346-residue chain is Holliday junction branch migration complex subunit RuvB (346 aa).

The segment at 1–182 (MKIELLTTPA…FGINSRFDYY (182 aa)) is large ATPase domain (RuvB-L). Residues Ile21, Arg22, Gly63, Lys66, Thr67, Thr68, 129-131 (EDF), Arg172, Tyr182, and Arg219 each bind ATP. Residue Thr67 participates in Mg(2+) binding. A small ATPAse domain (RuvB-S) region spans residues 183 to 253 (SPDLLEGIVM…IAMKTLECLD (71 aa)). The tract at residues 256–346 (EEGLDDMDKK…GLFDADGNLS (91 aa)) is head domain (RuvB-H). Residues Arg311 and Arg316 each contribute to the DNA site.

Belongs to the RuvB family. Homohexamer. Forms an RuvA(8)-RuvB(12)-Holliday junction (HJ) complex. HJ DNA is sandwiched between 2 RuvA tetramers; dsDNA enters through RuvA and exits via RuvB. An RuvB hexamer assembles on each DNA strand where it exits the tetramer. Each RuvB hexamer is contacted by two RuvA subunits (via domain III) on 2 adjacent RuvB subunits; this complex drives branch migration. In the full resolvosome a probable DNA-RuvA(4)-RuvB(12)-RuvC(2) complex forms which resolves the HJ.

The protein resides in the cytoplasm. The catalysed reaction is ATP + H2O = ADP + phosphate + H(+). Functionally, the RuvA-RuvB-RuvC complex processes Holliday junction (HJ) DNA during genetic recombination and DNA repair, while the RuvA-RuvB complex plays an important role in the rescue of blocked DNA replication forks via replication fork reversal (RFR). RuvA specifically binds to HJ cruciform DNA, conferring on it an open structure. The RuvB hexamer acts as an ATP-dependent pump, pulling dsDNA into and through the RuvAB complex. RuvB forms 2 homohexamers on either side of HJ DNA bound by 1 or 2 RuvA tetramers; 4 subunits per hexamer contact DNA at a time. Coordinated motions by a converter formed by DNA-disengaged RuvB subunits stimulates ATP hydrolysis and nucleotide exchange. Immobilization of the converter enables RuvB to convert the ATP-contained energy into a lever motion, pulling 2 nucleotides of DNA out of the RuvA tetramer per ATP hydrolyzed, thus driving DNA branch migration. The RuvB motors rotate together with the DNA substrate, which together with the progressing nucleotide cycle form the mechanistic basis for DNA recombination by continuous HJ branch migration. Branch migration allows RuvC to scan DNA until it finds its consensus sequence, where it cleaves and resolves cruciform DNA. The chain is Holliday junction branch migration complex subunit RuvB from Chlorobium phaeovibrioides (strain DSM 265 / 1930) (Prosthecochloris vibrioformis (strain DSM 265)).